Here is a 537-residue protein sequence, read N- to C-terminus: Frizzled-4 (537 aa).

The signal sequence occupies residues 1 to 36; sequence MAWPGTGPSSRGAPGGVGLRLGLLLQFLLLLRPTLG. The Extracellular portion of the chain corresponds to 37-212; it reads FGDEEERRCD…KCGYDAGLYS (176 aa). An FZ domain is found at 40-161; it reads EEERRCDPIR…NDHNHMCMEG (122 aa). 8 disulfide bridges follow: Cys-45/Cys-106, Cys-53/Cys-99, Cys-90/Cys-128, Cys-117/Cys-158, Cys-121/Cys-145, Cys-181/Cys-200, Cys-204/Cys-282, and Cys-302/Cys-377. Asn-59 is a glycosylation site (N-linked (GlcNAc...) asparagine). The N-linked (GlcNAc...) asparagine glycan is linked to Asn-144. Residues 213 to 243 traverse the membrane as a helical segment; sequence RSAKEFTDIWMAVWASLCFISTTFTVLTFLI. The Cytoplasmic segment spans residues 244–249; sequence DSSRFS. A helical transmembrane segment spans residues 250 to 275; it reads YPERPIIFLSMCYNIYSIAYIVRLTV. Residues 276-299 are Extracellular-facing; that stretch reads GRERISCDFEEAAEPVLIQEGLKN. Residues 300–333 traverse the membrane as a helical segment; that stretch reads TGCAIIFLLMYFFGMASSIWWVILTLTWFLAAGL. Residues 334-336 lie on the Cytoplasmic side of the membrane; the sequence is KWG. The helical transmembrane segment at 337-365 threads the bilayer; it reads HEAIEMHSSYFHIAAWAIPAVKTIVILIM. Topologically, residues 366–383 are extracellular; the sequence is RLVDADELTGLCYVGNQN. Residues 384-410 form a helical membrane-spanning segment; the sequence is LDALTGFVVAPLFTYLVIGTLFIAAGL. At 411–431 the chain is on the cytoplasmic side; the sequence is VALFKIRSNLQKDGTKTDKLE. A helical membrane pass occupies residues 432–460; sequence RLMVKIGVFSVLYTVPATCVIACYFYEIS. At 461-473 the chain is on the extracellular side; it reads NWALFRYSADDSN. A helical membrane pass occupies residues 474 to 495; the sequence is MAVEMLKIFMSLLVGITSGMWI. The Cytoplasmic segment spans residues 496–537; sequence WSAKTLHTWQKCSNRLVNSGKVKREKRGNGWVKPGKGNETVV. The short motif at 499–504 is the Lys-Thr-X-X-X-Trp motif, mediates interaction with the PDZ domain of Dvl family members element; that stretch reads KTLHTW. The short motif at 535–537 is the PDZ-binding element; sequence TVV.

This sequence belongs to the G-protein coupled receptor Fz/Smo family. In terms of assembly, interacts with MAGI3 and NDP. Component of a complex, at least composed of TSPAN12, FZD4 and norrin (NDP). Interacts (via FZ domain) with TSKU; TSKU competes with WNT2B for binding to FZD4, inhibiting Wnt signaling and repressing peripheral eye development. Interacts with glypican GPC3. In terms of processing, ubiquitinated by ZNRF3, leading to its degradation by the proteasome. Expressed in chondrocytes.

Its subcellular location is the cell membrane. In terms of biological role, receptor for Wnt proteins. Most frizzled receptors are coupled to the beta-catenin (CTNNB1) canonical signaling pathway, which leads to the activation of disheveled proteins, inhibition of GSK-3 kinase, nuclear accumulation of beta-catenin (CTNNB1) and activation of Wnt target genes. Plays a critical role in retinal vascularization by acting as a receptor for Wnt proteins and norrin (NDP). In retina, it can be activated by Wnt protein-binding and also by Wnt-independent signaling via binding of norrin (NDP), promoting in both cases beta-catenin (CTNNB1) accumulation and stimulation of LEF/TCF-mediated transcriptional programs. A second signaling pathway involving PKC and calcium fluxes has been seen for some family members, but it is not yet clear if it represents a distinct pathway or if it can be integrated in the canonical pathway, as PKC seems to be required for Wnt-mediated inactivation of GSK-3 kinase. Both pathways seem to involve interactions with G-proteins. May be involved in transduction and intercellular transmission of polarity information during tissue morphogenesis and/or in differentiated tissues. Activation by Wnt5A stimulates PKC activity via a G-protein-dependent mechanism. In Mus musculus (Mouse), this protein is Frizzled-4 (Fzd4).